Here is a 153-residue protein sequence, read N- to C-terminus: Melatonin receptor type 1A X2.0 (153 aa).

Residues 1–12 (HSSWYNRLFSNS) lie on the Cytoplasmic side of the membrane. Residues 13–33 (GTICYVGLVWVLALGAILPNL) traverse the membrane as a helical segment. At 34–57 (FVGSLRCDPRIFSCTFAQYVSSYY) the chain is on the extracellular side. The chain crosses the membrane as a helical span at residues 58–78 (TIAVVIFHFFLPIGVVSYCYL). Residues 79 to 112 (RIWVLVLNIRHRVKPDRHLHHQTWPYNIHGFITM) are Cytoplasmic-facing. A helical membrane pass occupies residues 113–133 (FVVFVLFAVCWGPLNIIGLTV). Residues 134–145 (AIYPPLGDSIPQ) lie on the Extracellular side of the membrane. A helical transmembrane segment spans residues 146–153 (WLFVASYF).

This sequence belongs to the G-protein coupled receptor 1 family.

Its subcellular location is the cell membrane. Its function is as follows. High affinity receptor for melatonin. The activity of this receptor is mediated by pertussis toxin sensitive G proteins that inhibits adenylate cyclase activity. This chain is Melatonin receptor type 1A X2.0, found in Xenopus laevis (African clawed frog).